Here is an 881-residue protein sequence, read N- to C-terminus: Valine--tRNA ligase (881 aa).

The 'HIGH' region signature appears at 49 to 59 (PNVTGKLHLGH). The 'KMSKS' region signature appears at 526-530 (KMSKS). ATP is bound at residue Lys-529. A coiled-coil region spans residues 810-881 (LADLINLDEE…VRQRLADLEK (72 aa)).

This sequence belongs to the class-I aminoacyl-tRNA synthetase family. ValS type 1 subfamily. Monomer.

Its subcellular location is the cytoplasm. The enzyme catalyses tRNA(Val) + L-valine + ATP = L-valyl-tRNA(Val) + AMP + diphosphate. In terms of biological role, catalyzes the attachment of valine to tRNA(Val). As ValRS can inadvertently accommodate and process structurally similar amino acids such as threonine, to avoid such errors, it has a 'posttransfer' editing activity that hydrolyzes mischarged Thr-tRNA(Val) in a tRNA-dependent manner. In Bacillus cereus (strain ATCC 14579 / DSM 31 / CCUG 7414 / JCM 2152 / NBRC 15305 / NCIMB 9373 / NCTC 2599 / NRRL B-3711), this protein is Valine--tRNA ligase.